Consider the following 122-residue polypeptide: Large ribosomal subunit protein bL20c (122 aa).

This sequence belongs to the bacterial ribosomal protein bL20 family.

It is found in the plastid. The protein localises to the chloroplast. Functionally, binds directly to 23S ribosomal RNA and is necessary for the in vitro assembly process of the 50S ribosomal subunit. It is not involved in the protein synthesizing functions of that subunit. The chain is Large ribosomal subunit protein bL20c from Dioscorea elephantipes (Elephant's foot yam).